A 375-amino-acid polypeptide reads, in one-letter code: Deoxyhypusine synthase-like protein (375 aa).

This sequence belongs to the deoxyhypusine synthase family.

This is Deoxyhypusine synthase-like protein from Elusimicrobium minutum (strain Pei191).